The sequence spans 312 residues: Dipeptide transport ATP-binding protein DppF (312 aa).

The region spanning 10 to 255 (IKNLDLTFNK…PIHPYTKSLL (246 aa)) is the ABC transporter domain. Residue 45-52 (GESGSGKT) participates in ATP binding.

This sequence belongs to the ABC transporter superfamily. In terms of assembly, the complex is composed of two ATP-binding proteins (DppD and DppF), two transmembrane proteins (DppB and DppC) and a solute-binding protein (DppA).

It localises to the cell membrane. The enzyme catalyses a dipeptide(out) + ATP + H2O = a dipeptide(in) + ADP + phosphate + H(+). Part of the ABC transporter DppABCDF involved in dipeptide transport. Responsible for energy coupling to the transport system. This chain is Dipeptide transport ATP-binding protein DppF, found in Lactococcus lactis subsp. cremoris (strain MG1363).